A 730-amino-acid polypeptide reads, in one-letter code: Nitrogen fixation protein FixI (730 aa).

The Cytoplasmic segment spans residues 1–101; the sequence is MHVTRDFSHY…AEVAEVAESR (101 aa). The region spanning 19–85 is the HMA domain; the sequence is KHIDLAVEGV…RLEELGYKAY (67 aa). 2 residues coordinate a metal cation: Cys30 and Cys33. Residues 102–123 form a helical membrane-spanning segment; that stretch reads FLLRCLGVAAFATMNVMMLSIP. Residues 124–138 lie on the Extracellular side of the membrane; sequence VWSGNVSDMLPEQRD. The chain crosses the membrane as a helical span at residues 139 to 162; the sequence is FFHWLSALIALPAAAYAGQPFFRS. Residues 163–168 lie on the Cytoplasmic side of the membrane; sequence AWRALS. The chain crosses the membrane as a helical span at residues 169–190; sequence AKTTNMDVPISIGVILALGMSV. The Extracellular segment spans residues 191–202; sequence VETIHHAEHAYF. Residues 203–223 traverse the membrane as a helical segment; sequence DAAIMLLTFLLVGRFLDQNMR. Topologically, residues 224–352 are cytoplasmic; sequence RRTRAVAGNL…RSRYMRLADR (129 aa). Residues 353-375 form a helical membrane-spanning segment; that stretch reads ASRLYAPVVHATALITILGWVIA. At 376–382 the chain is on the extracellular side; sequence GASWHDA. The chain crosses the membrane as a helical span at residues 383 to 400; the sequence is IVTGVAVLIITCPCALGL. Over 401-676 the chain is Cytoplasmic; that stretch reads AIPTVQTVAS…DSARKALHLM (276 aa). The active-site 4-aspartylphosphate intermediate is the Asp438. Positions 622 and 626 each coordinate Mg(2+). Residues 677–696 form a helical membrane-spanning segment; it reads RQNLWLAIGYNVLAVPVAIS. At 697–701 the chain is on the extracellular side; the sequence is GVVTP. The helical transmembrane segment at 702-720 threads the bilayer; sequence LIAAAAMSGSSILVMLNSL. Residues 721-730 are Cytoplasmic-facing; it reads RARSDSREIV.

The protein belongs to the cation transport ATPase (P-type) (TC 3.A.3) family. Type IB subfamily.

It localises to the cell membrane. The catalysed reaction is ATP + H2O = ADP + phosphate + H(+). Functionally, fixI is a pump of a specific cation involved in symbiotic nitrogen fixation. The four proteins FixG, FixH, FixI, and FixS may participate in a membrane-bound complex coupling the FixI cation pump with a redox process catalyzed by FixG. In Bradyrhizobium diazoefficiens (strain JCM 10833 / BCRC 13528 / IAM 13628 / NBRC 14792 / USDA 110), this protein is Nitrogen fixation protein FixI (fixI).